A 313-amino-acid polypeptide reads, in one-letter code: ADP-L-glycero-D-manno-heptose-6-epimerase (313 aa).

NADP(+)-binding positions include 10–11 (MI), 31–32 (DN), Lys-38, Lys-53, 75–79 (EGACS), and Asn-92. The Proton acceptor role is filled by Tyr-139. NADP(+) is bound at residue Lys-143. Asn-174 contacts substrate. NADP(+) contacts are provided by Val-175 and Lys-183. The active-site Proton acceptor is the Lys-183. Substrate contacts are provided by residues Ser-185, His-192, 206-209 (FEGS), Arg-214, and Tyr-277.

Belongs to the NAD(P)-dependent epimerase/dehydratase family. HldD subfamily. In terms of assembly, homopentamer. NADP(+) serves as cofactor.

The catalysed reaction is ADP-D-glycero-beta-D-manno-heptose = ADP-L-glycero-beta-D-manno-heptose. The protein operates within nucleotide-sugar biosynthesis; ADP-L-glycero-beta-D-manno-heptose biosynthesis; ADP-L-glycero-beta-D-manno-heptose from D-glycero-beta-D-manno-heptose 7-phosphate: step 4/4. Catalyzes the interconversion between ADP-D-glycero-beta-D-manno-heptose and ADP-L-glycero-beta-D-manno-heptose via an epimerization at carbon 6 of the heptose. This is ADP-L-glycero-D-manno-heptose-6-epimerase from Aliivibrio fischeri (strain MJ11) (Vibrio fischeri).